Here is a 354-residue protein sequence, read N- to C-terminus: Holliday junction branch migration complex subunit RuvB (354 aa).

Residues Met1 to Ser24 are disordered. The interval Thr5–Tyr195 is large ATPase domain (RuvB-L). ATP-binding positions include Leu34, Arg35, Gly76, Lys79, Thr80, Thr81, Glu142–Tyr144, Arg185, Tyr195, and Arg232. Residue Thr80 participates in Mg(2+) binding. The tract at residues Thr196–Asp266 is small ATPAse domain (RuvB-S). Residues Pro269–Ala354 are head domain (RuvB-H). DNA contacts are provided by Arg324 and Arg329.

Belongs to the RuvB family. Homohexamer. Forms an RuvA(8)-RuvB(12)-Holliday junction (HJ) complex. HJ DNA is sandwiched between 2 RuvA tetramers; dsDNA enters through RuvA and exits via RuvB. An RuvB hexamer assembles on each DNA strand where it exits the tetramer. Each RuvB hexamer is contacted by two RuvA subunits (via domain III) on 2 adjacent RuvB subunits; this complex drives branch migration. In the full resolvosome a probable DNA-RuvA(4)-RuvB(12)-RuvC(2) complex forms which resolves the HJ.

Its subcellular location is the cytoplasm. The catalysed reaction is ATP + H2O = ADP + phosphate + H(+). In terms of biological role, the RuvA-RuvB-RuvC complex processes Holliday junction (HJ) DNA during genetic recombination and DNA repair, while the RuvA-RuvB complex plays an important role in the rescue of blocked DNA replication forks via replication fork reversal (RFR). RuvA specifically binds to HJ cruciform DNA, conferring on it an open structure. The RuvB hexamer acts as an ATP-dependent pump, pulling dsDNA into and through the RuvAB complex. RuvB forms 2 homohexamers on either side of HJ DNA bound by 1 or 2 RuvA tetramers; 4 subunits per hexamer contact DNA at a time. Coordinated motions by a converter formed by DNA-disengaged RuvB subunits stimulates ATP hydrolysis and nucleotide exchange. Immobilization of the converter enables RuvB to convert the ATP-contained energy into a lever motion, pulling 2 nucleotides of DNA out of the RuvA tetramer per ATP hydrolyzed, thus driving DNA branch migration. The RuvB motors rotate together with the DNA substrate, which together with the progressing nucleotide cycle form the mechanistic basis for DNA recombination by continuous HJ branch migration. Branch migration allows RuvC to scan DNA until it finds its consensus sequence, where it cleaves and resolves cruciform DNA. This Paracidovorax citrulli (strain AAC00-1) (Acidovorax citrulli) protein is Holliday junction branch migration complex subunit RuvB.